The sequence spans 938 residues: Ubiquitin carboxyl-terminal hydrolase Usp2 (938 aa).

Disordered regions lie at residues 1–53 (MMLD…KVGA), 91–117 (KVKT…NTSR), 130–254 (FNGN…ISTT), 273–297 (EQNQ…HRYP), 360–410 (LSGQ…NLQQ), and 500–610 (KDAT…EKSE). The span at 22-36 (STTKTSSVVATSASS) shows a compositional bias: low complexity. Low complexity-rich tracts occupy residues 137–158 (TTTN…NTSN), 167–177 (STTATATSTST), 198–227 (MNGH…QRQQ), and 275–289 (NQVQ…PSSS). Over residues 392 to 410 (ASRSNHGSQAGGSSSNLQQ) the composition is skewed to polar residues. Composition is skewed to low complexity over residues 502 to 555 (ATTA…TARS) and 574 to 583 (TSRSSIGTSS). The span at 592–610 (HNSDDGYKTASSSRDEKSE) shows a compositional bias: basic and acidic residues. The USP domain maps to 613–938 (CGLRNIGNTC…SAYILFYERT (326 aa)). C622 acts as the Nucleophile in catalysis. C765, C768, C814, and C817 together coordinate Zn(2+). The Proton acceptor role is filled by H895.

It belongs to the peptidase C19 family. As to quaternary structure, interacts (via N-terminus) with imd (via N-terminus). Interacts with Rpt6.

The enzyme catalyses Thiol-dependent hydrolysis of ester, thioester, amide, peptide and isopeptide bonds formed by the C-terminal Gly of ubiquitin (a 76-residue protein attached to proteins as an intracellular targeting signal).. In terms of biological role, hydrolase that deubiquitinates polyubiquitinated target proteins. Required for preventing the activation of the Toll signaling cascades under unchallenged conditions. Essential for bodily calcium homeostasis. Required for preventing the activation of the immune deficiency (Imd) signaling cascade under unchallenged conditions. Regulates the Imd pathway by specifically removing 'Lys-48'-linked ubiquitin from imd. Also promotes imd degradation probably by binding to imd and enhancing its association with the proteasome. This is Ubiquitin carboxyl-terminal hydrolase Usp2 from Drosophila melanogaster (Fruit fly).